Reading from the N-terminus, the 327-residue chain is Undecaprenyl-phosphate 4-deoxy-4-formamido-L-arabinose transferase (327 aa).

2 helical membrane passes run 236–256 (LSVF…LLVV) and 270–290 (VFML…AMGL).

It belongs to the glycosyltransferase 2 family.

The protein localises to the cell inner membrane. The catalysed reaction is UDP-4-deoxy-4-formamido-beta-L-arabinose + di-trans,octa-cis-undecaprenyl phosphate = 4-deoxy-4-formamido-alpha-L-arabinopyranosyl di-trans,octa-cis-undecaprenyl phosphate + UDP. Its pathway is glycolipid biosynthesis; 4-amino-4-deoxy-alpha-L-arabinose undecaprenyl phosphate biosynthesis; 4-amino-4-deoxy-alpha-L-arabinose undecaprenyl phosphate from UDP-4-deoxy-4-formamido-beta-L-arabinose and undecaprenyl phosphate: step 1/2. It participates in bacterial outer membrane biogenesis; lipopolysaccharide biosynthesis. Its function is as follows. Catalyzes the transfer of 4-deoxy-4-formamido-L-arabinose from UDP to undecaprenyl phosphate. The modified arabinose is attached to lipid A and is required for resistance to polymyxin and cationic antimicrobial peptides. The polypeptide is Undecaprenyl-phosphate 4-deoxy-4-formamido-L-arabinose transferase (Enterobacter sp. (strain 638)).